The chain runs to 137 residues: Large ribosomal subunit protein uL16 (137 aa).

The protein belongs to the universal ribosomal protein uL16 family. As to quaternary structure, part of the 50S ribosomal subunit.

Functionally, binds 23S rRNA and is also seen to make contacts with the A and possibly P site tRNAs. This is Large ribosomal subunit protein uL16 from Acinetobacter baumannii (strain SDF).